Reading from the N-terminus, the 141-residue chain is Cholinesterase (141 aa).

Asn-39 is a glycosylation site (N-linked (GlcNAc...) asparagine). 49-50 (GG) contributes to the substrate binding site. Ser-131 functions as the Acyl-ester intermediate in the catalytic mechanism. Position 131 is a phosphoserine (Ser-131).

The protein belongs to the type-B carboxylesterase/lipase family. In terms of assembly, homotetramer; disulfide-linked. Dimer of dimers. As to expression, present in most cells except erythrocytes.

The protein resides in the secreted. The enzyme catalyses an acylcholine + H2O = a carboxylate + choline + H(+). Functionally, esterase with broad substrate specificity. Contributes to the inactivation of the neurotransmitter acetylcholine. Can degrade neurotoxic organophosphate esters. This Macaca mulatta (Rhesus macaque) protein is Cholinesterase (BCHE).